Consider the following 948-residue polypeptide: Coatomer subunit beta-2 (948 aa).

6 HEAT repeats span residues 49-87 (ETIP…TDSK), 92-126 (PEMI…MKET), 127-164 (EIVE…LPHG), 274-311 (TAIR…TLHR), 312-349 (DIMV…HHNI), and 391-428 (EVAS…TNPK).

In terms of assembly, oligomeric complex that consists of at least the alpha, beta, beta', gamma, delta, epsilon and zeta subunits.

Its subcellular location is the cytoplasm. The protein resides in the golgi apparatus membrane. The protein localises to the cytoplasmic vesicle. It is found in the COPI-coated vesicle membrane. Functionally, the coatomer is a cytosolic protein complex that binds to dilysine motifs and reversibly associates with Golgi non-clathrin-coated vesicles, which further mediate biosynthetic protein transport from the ER, via the Golgi up to the trans Golgi network. Coatomer complex is required for budding from Golgi membranes, and is essential for the retrograde Golgi-to-ER transport of dilysine-tagged proteins. This chain is Coatomer subunit beta-2, found in Arabidopsis thaliana (Mouse-ear cress).